The sequence spans 681 residues: DNA-directed RNA polymerase subunit beta' (681 aa).

The Zn(2+) site is built by C69, C71, C87, and C90. 3 residues coordinate Mg(2+): D489, D491, and D493.

This sequence belongs to the RNA polymerase beta' chain family. RpoC1 subfamily. In terms of assembly, in plastids the minimal PEP RNA polymerase catalytic core is composed of four subunits: alpha, beta, beta', and beta''. When a (nuclear-encoded) sigma factor is associated with the core the holoenzyme is formed, which can initiate transcription. The cofactor is Mg(2+). Zn(2+) is required as a cofactor.

The protein resides in the plastid. The protein localises to the chloroplast. The enzyme catalyses RNA(n) + a ribonucleoside 5'-triphosphate = RNA(n+1) + diphosphate. Functionally, DNA-dependent RNA polymerase catalyzes the transcription of DNA into RNA using the four ribonucleoside triphosphates as substrates. This Nicotiana sylvestris (Wood tobacco) protein is DNA-directed RNA polymerase subunit beta'.